Reading from the N-terminus, the 146-residue chain is Large ribosomal subunit protein uL11 (146 aa).

The protein belongs to the universal ribosomal protein uL11 family. In terms of assembly, part of the ribosomal stalk of the 50S ribosomal subunit. Interacts with L10 and the large rRNA to form the base of the stalk. L10 forms an elongated spine to which L12 dimers bind in a sequential fashion forming a multimeric L10(L12)X complex. One or more lysine residues are methylated.

Its function is as follows. Forms part of the ribosomal stalk which helps the ribosome interact with GTP-bound translation factors. The protein is Large ribosomal subunit protein uL11 of Buchnera aphidicola subsp. Baizongia pistaciae (strain Bp).